The sequence spans 463 residues: Putative F-box protein At3g29830 (463 aa).

An F-box domain is found at 7–55 (RDRISSLPDVVLVMILSFLSFKDNVKTSILSKRWRNICYEAKNISFKES).

In Arabidopsis thaliana (Mouse-ear cress), this protein is Putative F-box protein At3g29830.